A 103-amino-acid polypeptide reads, in one-letter code: V-type ATP synthase subunit F (103 aa).

Belongs to the V-ATPase F subunit family.

Its function is as follows. Produces ATP from ADP in the presence of a proton gradient across the membrane. The chain is V-type ATP synthase subunit F from Clostridium botulinum (strain Alaska E43 / Type E3).